Reading from the N-terminus, the 272-residue chain is Acyl-[acyl-carrier-protein]--UDP-N-acetylglucosamine O-acyltransferase (272 aa).

It belongs to the transferase hexapeptide repeat family. LpxA subfamily. Homotrimer.

The protein resides in the cytoplasm. It catalyses the reaction a (3R)-hydroxyacyl-[ACP] + UDP-N-acetyl-alpha-D-glucosamine = a UDP-3-O-[(3R)-3-hydroxyacyl]-N-acetyl-alpha-D-glucosamine + holo-[ACP]. It participates in glycolipid biosynthesis; lipid IV(A) biosynthesis; lipid IV(A) from (3R)-3-hydroxytetradecanoyl-[acyl-carrier-protein] and UDP-N-acetyl-alpha-D-glucosamine: step 1/6. Involved in the biosynthesis of lipid A, a phosphorylated glycolipid that anchors the lipopolysaccharide to the outer membrane of the cell. The chain is Acyl-[acyl-carrier-protein]--UDP-N-acetylglucosamine O-acyltransferase from Rhizobium leguminosarum bv. trifolii (strain WSM2304).